Here is a 219-residue protein sequence, read N- to C-terminus: Redox-sensing transcriptional repressor Rex (219 aa).

The segment at residues 17–56 (LYYRIFKRFHRENIVKTSSKQIAEAIGIDPATVRRDFSYF) is a DNA-binding region (H-T-H motif). 91–96 (GVGNIG) lines the NAD(+) pocket.

Belongs to the transcriptional regulatory Rex family. In terms of assembly, homodimer.

Its subcellular location is the cytoplasm. In terms of biological role, modulates transcription in response to changes in cellular NADH/NAD(+) redox state. The polypeptide is Redox-sensing transcriptional repressor Rex (Streptococcus thermophilus (strain ATCC BAA-491 / LMD-9)).